We begin with the raw amino-acid sequence, 621 residues long: MNFVYLVVLCPLVSFCLLLFFIDYLPKMLVKKIGIVSIFISMIITFYSLFDFLNCGKQCVFYIPLWVWISIDYLKIDFNFMLDGLSITMLTMTTSIGFLIHLFSSWYIKLQDEYTRFFSYMNLFIASMVLLLLADNLLVMYIGWEGVGLCSYLLVGFYYSKINSGYAAIKGFIITRIGDIFLILAIFFIYKNFGTLNFRELKLIFETTNVVENFKFLNYVSLFLLIAAIAKSAQVPLQTWLIDAMAGPTPASALIHSSTMVTAGVYLIARMNFLFSLSPIILYILGIISCLTIIMSCLSALVQKNIKCILAYSTMGQVGYMFLALAMKEWTLAINHLVTHAIFKTLLFLSAGAVIILLNNEKNIFNMGGLRKKFPMLYFSFLIGGASLASFPILTSGFYSKGNILFSALENNYYLFLVLGLLGSVLTSIYTFRMIFLVFCGAQKYRAHYVFFSRTLANTLPLLILILLSTVIFVLIHLPLSSVFSKTTPSFLINNNKLLFEIGCSVLSLLGMFISYYLFLVNRMLVDLLLNTKLGNFIYNFWYDSWGFNSLYNILCVNPYLYVAKRLKHDPINIFMSIPITFCFFVSKNLKYIHNGYLRVYVFSIMFGLFLFILMAIRLYK.

The next 17 membrane-spanning stretches (helical) occupy residues 2–22 (NFVYLVVLCPLVSFCLLLFFI), 33–53 (IGIVSIFISMIITFYSLFDFL), 59–79 (CVFYIPLWVWISIDYLKIDFN), 80–100 (FMLDGLSITMLTMTTSIGFLI), 123–143 (LFIASMVLLLLADNLLVMYIG), 169–189 (IKGFIITRIGDIFLILAIFFI), 210–230 (VVENFKFLNYVSLFLLIAAIA), 249–269 (TPASALIHSSTMVTAGVYLIA), 274–294 (LFSLSPIILYILGIISCLTII), 306–326 (IKCILAYSTMGQVGYMFLALA), 338–358 (VTHAIFKTLLFLSAGAVIILL), 374–394 (FPMLYFSFLIGGASLASFPIL), 412–432 (NYYLFLVLGLLGSVLTSIYTF), 460–480 (LPLLILILLSTVIFVLIHLPL), 500–520 (FEIGCSVLSLLGMFISYYLFL), 537–557 (FIYNFWYDSWGFNSLYNILCV), and 597–617 (YLRVYVFSIMFGLFLFILMAI).

Belongs to the complex I subunit 5 family. Composed of 13 different subunits. Subunits NuoA, H, J, K, L, M, N constitute the membrane sector of the complex.

The protein resides in the cell membrane. It catalyses the reaction a quinone + NADH + 5 H(+)(in) = a quinol + NAD(+) + 4 H(+)(out). Its function is as follows. NDH-1 shuttles electrons from NADH, via FMN and iron-sulfur (Fe-S) centers, to quinones in the respiratory chain. Couples the redox reaction to proton translocation (for every two electrons transferred, four hydrogen ions are translocated across the cytoplasmic membrane), and thus conserves the redox energy in a proton gradient. This Buchnera aphidicola subsp. Baizongia pistaciae (strain Bp) protein is NADH-quinone oxidoreductase subunit L (nuoL).